Reading from the N-terminus, the 386-residue chain is Alpha-D-kanosaminyltransferase (386 aa).

This sequence belongs to the glycosyltransferase group 1 family.

It carries out the reaction 2'-deamino-2'-hydroxyneamine + UDP-alpha-D-kanosamine = kanamycin A + UDP + H(+). The catalysed reaction is neamine + UDP-alpha-D-kanosamine = kanamycin B + UDP + H(+). It catalyses the reaction paromamine + UDP-alpha-D-kanosamine = kanamycin C + UDP + H(+). The enzyme catalyses 2'-deamino-2'-hydroxyparomamine + UDP-alpha-D-kanosamine = kanamycin X + UDP + H(+). Its pathway is antibiotic biosynthesis; kanamycin biosynthesis. Glycosyltransferase involved in the biosynthesis of kanamycins by catalyzing the transfer of the hexose kanosamine from UDP-alpha-D-kanosamine to disaccharide precursors. Can also use UDP-alpha-D-glucose as sugar donor with much lower efficiency. This chain is Alpha-D-kanosaminyltransferase (kanE), found in Streptomyces kanamyceticus.